Reading from the N-terminus, the 186-residue chain is uncharacterized protein (186 aa).

CBS domains follow at residues 10 to 69 and 77 to 133; these read IMKK…KLPP and ISSG…IIST.

This is an uncharacterized protein from Methanocaldococcus jannaschii (strain ATCC 43067 / DSM 2661 / JAL-1 / JCM 10045 / NBRC 100440) (Methanococcus jannaschii).